The following is a 282-amino-acid chain: MSRQTATALPTGTSKCPPSQRVPTLSGTTASNSDLASLFECPVCFDYVLPPILQCQSGHLVCSNCRPKLTCCPTCRGPLGSIRNLAMEKVANSVLFPCKYASSGCEVTLPHTDKAEHEELCEFRPYSCPCPGASCKWQGSLDAVMPHLLHQHKSITTLQGEDIVFLATDINLPGAVDWVMMQSCFGFHFMLVLEKQEKYDGHQQFFAIVQLIGTRKQAENFAYRLELNGHRRRLTWEATPRSIHEGIATAIMNSDCLVFDTSIAQLFAENGNLGINVTISMC.

Residues 1 to 28 (MSRQTATALPTGTSKCPPSQRVPTLSGT) form a disordered region. An RING-type zinc finger spans residues 41–76 (CPVCFDYVLPPILQCQSGHLVCSNCRPKLTCCPTCR). The segment at 90–282 (VANSVLFPCK…LGINVTISMC (193 aa)) is SBD. The SIAH-type zinc finger occupies 93–153 (SVLFPCKYAS…VMPHLLHQHK (61 aa)). C98, C105, H117, C121, C128, C135, H147, and H152 together coordinate Zn(2+).

The protein belongs to the SINA (Seven in absentia) family. As to quaternary structure, homodimer.

The catalysed reaction is S-ubiquitinyl-[E2 ubiquitin-conjugating enzyme]-L-cysteine + [acceptor protein]-L-lysine = [E2 ubiquitin-conjugating enzyme]-L-cysteine + N(6)-ubiquitinyl-[acceptor protein]-L-lysine.. The protein operates within protein modification; protein ubiquitination. E3 ubiquitin-protein ligase that mediates ubiquitination and subsequent proteasomal degradation of target proteins. E3 ubiquitin ligases accept ubiquitin from an E2 ubiquitin-conjugating enzyme in the form of a thioester and then directly transfers the ubiquitin to targeted substrates. It probably triggers the ubiquitin-mediated degradation of different substrates. This chain is E3 ubiquitin-protein ligase Siah1 (siah1), found in Danio rerio (Zebrafish).